We begin with the raw amino-acid sequence, 598 residues long: Aspartate--tRNA(Asp/Asn) ligase (598 aa).

L-aspartate is bound at residue Glu177. The tract at residues 201–204 is aspartate; that stretch reads QLFK. Arg223 provides a ligand contact to L-aspartate. ATP is bound by residues 223-225 and Gln232; that span reads RDE. His456 provides a ligand contact to L-aspartate. Glu493 serves as a coordination point for ATP. Arg500 lines the L-aspartate pocket. 545–548 is an ATP binding site; it reads GVDR.

The protein belongs to the class-II aminoacyl-tRNA synthetase family. Type 1 subfamily. As to quaternary structure, homodimer.

It is found in the cytoplasm. The enzyme catalyses tRNA(Asx) + L-aspartate + ATP = L-aspartyl-tRNA(Asx) + AMP + diphosphate. Aspartyl-tRNA synthetase with relaxed tRNA specificity since it is able to aspartylate not only its cognate tRNA(Asp) but also tRNA(Asn). Reaction proceeds in two steps: L-aspartate is first activated by ATP to form Asp-AMP and then transferred to the acceptor end of tRNA(Asp/Asn). The chain is Aspartate--tRNA(Asp/Asn) ligase from Prochlorococcus marinus subsp. pastoris (strain CCMP1986 / NIES-2087 / MED4).